We begin with the raw amino-acid sequence, 309 residues long: Thioredoxin reductase (309 aa).

FAD is bound at residue 35–42; sequence EKQFPGGK. C134 and C137 are disulfide-bonded. Residue 277–286 coordinates FAD; the sequence is DIVDKNVRQI.

The protein belongs to the class-II pyridine nucleotide-disulfide oxidoreductase family. Homodimer. Requires FAD as cofactor.

Its subcellular location is the cytoplasm. The catalysed reaction is [thioredoxin]-dithiol + NADP(+) = [thioredoxin]-disulfide + NADPH + H(+). This Ureaplasma parvum serovar 3 (strain ATCC 700970) protein is Thioredoxin reductase (trxB).